Here is a 168-residue protein sequence, read N- to C-terminus: Ribosome maturation factor RimM (168 aa).

A PRC barrel domain is found at 96–168; sequence EGDYYWTDLI…IIVVEWDADF (73 aa).

It belongs to the RimM family. In terms of assembly, binds ribosomal protein uS19.

The protein localises to the cytoplasm. In terms of biological role, an accessory protein needed during the final step in the assembly of 30S ribosomal subunit, possibly for assembly of the head region. Essential for efficient processing of 16S rRNA. May be needed both before and after RbfA during the maturation of 16S rRNA. It has affinity for free ribosomal 30S subunits but not for 70S ribosomes. The sequence is that of Ribosome maturation factor RimM from Coxiella burnetii (strain Dugway 5J108-111).